A 184-amino-acid chain; its full sequence is dITP/XTP pyrophosphatase (184 aa).

7 to 12 (TSNPGK) is a binding site for substrate. Residues Glu36 and Asp65 each coordinate Mg(2+). Residue Asp65 is the Proton acceptor of the active site. Substrate is bound by residues Ser66, 139-142 (FGFD), Lys162, and 167-168 (HR).

The protein belongs to the HAM1 NTPase family. Homodimer. Mg(2+) is required as a cofactor.

The enzyme catalyses XTP + H2O = XMP + diphosphate + H(+). The catalysed reaction is dITP + H2O = dIMP + diphosphate + H(+). It catalyses the reaction ITP + H2O = IMP + diphosphate + H(+). In terms of biological role, pyrophosphatase that catalyzes the hydrolysis of nucleoside triphosphates to their monophosphate derivatives, with a high preference for the non-canonical purine nucleotides XTP (xanthosine triphosphate), dITP (deoxyinosine triphosphate) and ITP. Seems to function as a house-cleaning enzyme that removes non-canonical purine nucleotides from the nucleotide pool, thus preventing their incorporation into DNA/RNA and avoiding chromosomal lesions. This Thermococcus kodakarensis (strain ATCC BAA-918 / JCM 12380 / KOD1) (Pyrococcus kodakaraensis (strain KOD1)) protein is dITP/XTP pyrophosphatase.